We begin with the raw amino-acid sequence, 200 residues long: Small ribosomal subunit protein uS2 (200 aa).

Belongs to the universal ribosomal protein uS2 family.

This chain is Small ribosomal subunit protein uS2, found in Picrophilus torridus (strain ATCC 700027 / DSM 9790 / JCM 10055 / NBRC 100828 / KAW 2/3).